A 114-amino-acid polypeptide reads, in one-letter code: Iron-sulfur cluster insertion protein ErpA (114 aa).

Positions 42, 106, and 108 each coordinate iron-sulfur cluster.

Belongs to the HesB/IscA family. In terms of assembly, homodimer. The cofactor is iron-sulfur cluster.

In terms of biological role, required for insertion of 4Fe-4S clusters for at least IspG. The polypeptide is Iron-sulfur cluster insertion protein ErpA (Buchnera aphidicola subsp. Acyrthosiphon pisum (strain 5A)).